Here is a 494-residue protein sequence, read N- to C-terminus: Ketol-acid reductoisomerase (NADP(+)) (494 aa).

The KARI N-terminal Rossmann domain maps to leucine 14 to serine 208. Residues cysteine 45–glutamine 48, arginine 68, arginine 76, serine 78, and aspartate 108–glutamine 110 contribute to the NADP(+) site. The active site involves histidine 132. Glycine 158 is a binding site for NADP(+). KARI C-terminal knotted domains are found at residues serine 209–alanine 344 and phenylalanine 345–methionine 487. Mg(2+) is bound by residues aspartate 217, glutamate 221, glutamate 389, and glutamate 393. Residue serine 414 coordinates substrate.

It belongs to the ketol-acid reductoisomerase family. Mg(2+) serves as cofactor.

The catalysed reaction is (2R)-2,3-dihydroxy-3-methylbutanoate + NADP(+) = (2S)-2-acetolactate + NADPH + H(+). The enzyme catalyses (2R,3R)-2,3-dihydroxy-3-methylpentanoate + NADP(+) = (S)-2-ethyl-2-hydroxy-3-oxobutanoate + NADPH + H(+). Its pathway is amino-acid biosynthesis; L-isoleucine biosynthesis; L-isoleucine from 2-oxobutanoate: step 2/4. It functions in the pathway amino-acid biosynthesis; L-valine biosynthesis; L-valine from pyruvate: step 2/4. Functionally, involved in the biosynthesis of branched-chain amino acids (BCAA). Catalyzes an alkyl-migration followed by a ketol-acid reduction of (S)-2-acetolactate (S2AL) to yield (R)-2,3-dihydroxy-isovalerate. In the isomerase reaction, S2AL is rearranged via a Mg-dependent methyl migration to produce 3-hydroxy-3-methyl-2-ketobutyrate (HMKB). In the reductase reaction, this 2-ketoacid undergoes a metal-dependent reduction by NADPH to yield (R)-2,3-dihydroxy-isovalerate. This chain is Ketol-acid reductoisomerase (NADP(+)), found in Tolumonas auensis (strain DSM 9187 / NBRC 110442 / TA 4).